The following is a 142-amino-acid chain: Hemoglobin subunit alpha (142 aa).

Residue S1 is modified to N-acetylserine. The Globin domain maps to 1–142; it reads SLSDKDKNTV…LALALSERYR (142 aa). H59 serves as a coordination point for O2. Residue H88 coordinates heme b.

Belongs to the globin family. As to quaternary structure, heterotetramer of two alpha chains and two beta chains. Can form polymers. As to expression, red blood cells.

Functionally, involved in oxygen transport from gills to the various peripheral tissues. The protein is Hemoglobin subunit alpha (hba) of Chelidonichthys kumu (Bluefin gurnard).